The chain runs to 97 residues: MRTYEMMFVLRPDLEEEQVLETKERLQKIIADFGGEFINAADGWGKKRLAYAIDDYVEGIYSLWYFKGKPETVDELDRIIKISENFLRHIIIRQDEK.

The protein belongs to the bacterial ribosomal protein bS6 family.

Functionally, binds together with bS18 to 16S ribosomal RNA. This Syntrophomonas wolfei subsp. wolfei (strain DSM 2245B / Goettingen) protein is Small ribosomal subunit protein bS6.